Here is a 205-residue protein sequence, read N- to C-terminus: tRNA 2-(methylsulfanyl)-N(6)-isopentenyladenosine(37) hydroxylase (205 aa).

Residues glutamate 38, glutamate 69, histidine 72, glutamate 122, glutamate 151, and histidine 154 each coordinate Fe cation.

Belongs to the MiaE family. Homodimer. It depends on Fe cation as a cofactor.

It catalyses the reaction 2-methylsulfanyl-N(6)-dimethylallyladenosine(37) in tRNA + AH2 + O2 = N(6)-[(2E)-4-hydroxy-3-methylbut-2-en-1-yl]-2-(methylsulfanyl)adenosine(37) in tRNA + A + H2O. The protein operates within tRNA modification; 2-methylthio-N-6-(cis-hydroxy)isopentenyl adenosine-tRNA biosynthesis. Its function is as follows. Involved in specific tRNA modification. Catalyzes the oxygen-dependent hydroxylation of 2-methylthio-N-6-isopentenyl adenosine (ms2i6A) to produce 2-methylthio-N-6-(cis-hydroxy)isopentenyl adenosine (ms2io6A) at position 37 in tRNAs. The polypeptide is tRNA 2-(methylsulfanyl)-N(6)-isopentenyladenosine(37) hydroxylase (Pseudomonas putida (strain ATCC 47054 / DSM 6125 / CFBP 8728 / NCIMB 11950 / KT2440)).